The chain runs to 425 residues: MNTVNTRKKFFPNVTDEEWNDWTWQVKNRLESVEDLKKYVDLSEEETEGVVRTLETLRMAITPYYFSLIDLNSDRCPIRKQAIPTIQEIHQSDADLLDPLHEDEDSPVPGLTHRYPDRVLLLITDMCSMYCRHCTRRRFAGSSDDAMPMDRIDKAIEYIAKTPQVRDVLLSGGDALLVSDKKLESIIQKLRAIPHVEIIRIGSRTPVVLPQRITPELCNMLKKYHPIWLNTHFNHPQEVTPEAKKACEMLADAGVPLGNQTVLLRGINDSVPVMKRLVHDLVMMRVRPYYIYQCDLSMGLEHFRTPVSKGIEIIEGLRGHTSGYAVPTFVVDAPGGGGKTPVMPQYVISQSPHRVVLRNFEGVITTYTEPENYTHEPCYDEEKFEKMYEISGVYMLDEGLKMSLEPSHLARHERNKKRAEAEGKK.

The region spanning 113–325 (HRYPDRVLLL…GLRGHTSGYA (213 aa)) is the Radical SAM core domain. [4Fe-4S] cluster is bound by residues Cys-127, Cys-131, and Cys-134. Lys-339 carries the post-translational modification N6-(pyridoxal phosphate)lysine.

It belongs to the radical SAM superfamily. KamA family. As to quaternary structure, homotetramer. [4Fe-4S] cluster serves as cofactor. Pyridoxal 5'-phosphate is required as a cofactor.

The enzyme catalyses L-lysine = (3S)-3,6-diaminohexanoate. The protein operates within amino-acid degradation; L-lysine degradation via acetate pathway. Its function is as follows. Catalyzes the interconversion of L-alpha-lysine and L-beta-lysine. In Fusobacterium nucleatum subsp. nucleatum (strain ATCC 25586 / DSM 15643 / BCRC 10681 / CIP 101130 / JCM 8532 / KCTC 2640 / LMG 13131 / VPI 4355), this protein is L-lysine 2,3-aminomutase.